Consider the following 833-residue polypeptide: Phosphatidylinositol-3-phosphatase myotubularin-2 (833 aa).

Residues 42-109 (GSYSNLDCLL…VAIEKFNKLA (68 aa)) enclose the GRAM domain. The region spanning 181–647 (TNPKERLLNE…LAPTLWPQFH (467 aa)) is the Myotubularin phosphatase domain. Residues 329 to 332 (NGAK), 354 to 355 (NI), 440 to 446 (CSDGWDR), and Arg-486 each bind substrate. The Phosphocysteine intermediate role is filled by Cys-440. A disordered region spans residues 503–530 (QSSSARSFPSSPVRQSPGSAAAQSSSSS). The span at 504-530 (SSSARSFPSSPVRQSPGSAAAQSSSSS) shows a compositional bias: low complexity. Residues 660–717 (ETEDQCRAMTVKYSEMKKEKEEAERKVDELSSAMESLNEELLNERDISRAARESAKRA) adopt a coiled-coil conformation. The segment at 753–772 (KCSHSIPQKQSEDNTTDVSE) is disordered.

The protein belongs to the protein-tyrosine phosphatase family. Non-receptor class myotubularin subfamily. Mostly expressed in flowers and roots, and, to a lower extent, in siliques and leaves.

Its subcellular location is the cytoplasm. The enzyme catalyses a 1,2-diacyl-sn-glycero-3-phospho-(1D-myo-inositol-3-phosphate) + H2O = a 1,2-diacyl-sn-glycero-3-phospho-(1D-myo-inositol) + phosphate. The catalysed reaction is a 1,2-diacyl-sn-glycero-3-phospho-(1D-myo-inositol-3,5-bisphosphate) + H2O = a 1,2-diacyl-sn-glycero-3-phospho-(1D-myo-inositol-5-phosphate) + phosphate. In terms of biological role, phosphatase with phosphoinositide 3'-phosphatase activity that can use phosphatidylinositol-3-phosphate (PtdIns3P) and phosphatidylinositol-3,5-diphosphate (PtdIns3,5P(2)) as substrates and produces phosphatidylinositol-5-phosphate (PtdIns5P); participates in pathway(s) that transfer gene regulatory signals to the nucleus. The polypeptide is Phosphatidylinositol-3-phosphatase myotubularin-2 (MTM2) (Arabidopsis thaliana (Mouse-ear cress)).